The following is a 411-amino-acid chain: Adherens junction-associated protein 1 (411 aa).

The signal sequence occupies residues 1–43 (MWIQQLLGLSSMPIRWPGRSLGSHLWILIAMLQLAVDFPSCDS). Residues 44–283 (LGPGPEFRLL…GETSGLAVHQ (240 aa)) are Extracellular-facing. Composition is skewed to low complexity over residues 62–76 (LWSL…LPTP), 121–145 (PPAA…AGAA), and 247–264 (TPVG…SNNG). Disordered stretches follow at residues 62-156 (LWSL…RGRR) and 242-270 (DPWK…IQPP). Residues 284–304 (IITITVSLIMVIAALITTLVL) traverse the membrane as a helical segment. A targeting signals region spans residues 304–411 (LKNCCAPSGH…VSEKWFEISC (108 aa)). The Cytoplasmic segment spans residues 305-411 (KNCCAPSGHT…VSEKWFEISC (107 aa)).

As to quaternary structure, forms a complex with CDH1 and CTNNB1; interacts directly with CTNNB1. Interacts with AP1M2 and with isoform 2 of BSG/CD147.

It localises to the basolateral cell membrane. The protein resides in the apical cell membrane. It is found in the cell junction. Its subcellular location is the adherens junction. Its function is as follows. Plays a role in cell adhesion and cell migration. The chain is Adherens junction-associated protein 1 (Ajap1) from Rattus norvegicus (Rat).